Here is a 149-residue protein sequence, read N- to C-terminus: Large ribosomal subunit protein bL9 (149 aa).

This sequence belongs to the bacterial ribosomal protein bL9 family.

Functionally, binds to the 23S rRNA. The protein is Large ribosomal subunit protein bL9 of Mannheimia succiniciproducens (strain KCTC 0769BP / MBEL55E).